The following is a 455-amino-acid chain: ATP-dependent protease ATPase subunit HslU (455 aa).

ATP-binding positions include I19, 61 to 66, D268, E333, and R405; that span reads GVGKTE.

The protein belongs to the ClpX chaperone family. HslU subfamily. As to quaternary structure, a double ring-shaped homohexamer of HslV is capped on each side by a ring-shaped HslU homohexamer. The assembly of the HslU/HslV complex is dependent on binding of ATP.

It localises to the cytoplasm. In terms of biological role, ATPase subunit of a proteasome-like degradation complex; this subunit has chaperone activity. The binding of ATP and its subsequent hydrolysis by HslU are essential for unfolding of protein substrates subsequently hydrolyzed by HslV. HslU recognizes the N-terminal part of its protein substrates and unfolds these before they are guided to HslV for hydrolysis. This chain is ATP-dependent protease ATPase subunit HslU, found in Francisella philomiragia subsp. philomiragia (strain ATCC 25017 / CCUG 19701 / FSC 153 / O#319-036).